A 200-amino-acid polypeptide reads, in one-letter code: Recoverin (200 aa).

A lipid anchor (N-myristoyl glycine) is attached at Gly-2. 4 consecutive EF-hand domains span residues 25 to 60, 61 to 96, 97 to 132, and 147 to 182; these read EEELCSWYQSFLKDCPTGRITQQQFQSIYAKFFPDT, DPKAYAQHVFRSFDSNLDGTLDFKEYVIALHMTTAG, KTNQKLEWAFSLYDVDGNGTISKNEVLEIVMAIFKM, and TPEKRAEKIWKYFGKNDDDKLTEKEFIEGTLANKEI. Position 39 is a cysteine sulfenic acid (-SOH) (Cys-39). Residues Asp-74, Asn-76, Asp-78, Thr-80, Glu-85, Asp-110, Asp-112, Asn-114, Thr-116, and Glu-121 each coordinate Ca(2+). Positions 189-192 are interaction with GRK1; sequence EPQK.

This sequence belongs to the recoverin family. In terms of assembly, homodimer; disulfide-linked. Homodimerization is caused by prolonged intense illumination. May form a complex composed of RHO, GRK1 and RCVRN in a Ca(2+)-dependent manner; RCVRN prevents the interaction between GRK1 and RHO. Interacts (via C-terminus) with GRK1 (via N-terminus); the interaction is Ca(2+)-dependent. The N-terminal glycine is linked to one of four different types of acyl groups. The most abundant is myristoleate (14:1), but 14:0, 14:2, and 12:0 acyl residues are also present. The Ca(2+) induced exposure of the myristoyl group, known as the calcium-myristoyl switch, promotes RCVRN binding to the photoreceptor cell membranes only when intracellular Ca(2+) concentration is high. In terms of processing, oxidation on Cys-39 occurs in response to prolonged intense illumination and results in the formation of disulfide homodimers, and to a lesser extent disulfide-linked heterodimers. Retina and pineal gland.

The protein resides in the photoreceptor inner segment. Its subcellular location is the cell projection. The protein localises to the cilium. It is found in the photoreceptor outer segment. It localises to the photoreceptor outer segment membrane. The protein resides in the perikaryon. In terms of biological role, acts as a calcium sensor and regulates phototransduction of cone and rod photoreceptor cells. Modulates light sensitivity of cone photoreceptor in dark and dim conditions. In response to high Ca(2+) levels induced by low light levels, prolongs RHO/rhodopsin activation in rod photoreceptor cells by binding to and inhibiting GRK1-mediated phosphorylation of RHO/rhodopsin. Plays a role in scotopic vision/enhances vision in dim light by enhancing signal transfer between rod photoreceptors and rod bipolar cells. Improves rod photoreceptor sensitivity in dim light and mediates response of rod photoreceptors to facilitate detection of change and motion in bright light. The sequence is that of Recoverin (RCVRN) from Homo sapiens (Human).